Reading from the N-terminus, the 392-residue chain is MSQAKTDYYSEEKTFSAPSANSQQGTQLPSKVYNKGLKDLEDNDIEGLLSSLSIDELEDLNNDFDPDNSMLPPSQRCRDQTDKEPTGPYKRDNLLKFLEDKAKTEKDWEDVCPYTPGQKRGKVYDSDSGRNSEEPENGKMEMPIEIDLDDDEEELECALVTAPEKDLVDLAGILGMHNVLNQPQYYNALKGKTQDESTGTTFNGIMQSYVPRIVPDEPDNDTDVESCINRLREDDTDLKEVNINNMKRVSKERIRSLIEAACNSKHIEKFSLANTAISDSEARGLIELIETSPSLRVLNVESNFLTPELLARLLRSTLVTQSIVEFKADNQRQSVLGNQVEMDMMMAIEENESLLRVGISFASMEARHRVSEALERNYERVRLRRLGKDPNV.

Disordered stretches follow at residues methionine 1 to serine 30, aspartate 59 to lysine 90, and glutamine 118 to glycine 138. A compositionally biased stretch (polar residues) spans serine 16 to proline 29. 2 stretches are compositionally biased toward basic and acidic residues: residues arginine 76–lysine 90 and lysine 122–glycine 138.

The protein belongs to the tropomodulin family. As to quaternary structure, binds to the N-terminus of actin.

Its subcellular location is the cytoplasm. The protein resides in the cytoskeleton. Functionally, acts as the pointed end capping protein which maintains the length and dynamics of the actin filament. Blocks the elongation and depolymerization of the actin filaments at the pointed end. This Caenorhabditis elegans protein is Tropomodulin (unc-94).